The following is a 154-amino-acid chain: Transcription antitermination protein NusB (154 aa).

Belongs to the NusB family.

Involved in transcription antitermination. Required for transcription of ribosomal RNA (rRNA) genes. Binds specifically to the boxA antiterminator sequence of the ribosomal RNA (rrn) operons. This Methylobacillus flagellatus (strain ATCC 51484 / DSM 6875 / VKM B-1610 / KT) protein is Transcription antitermination protein NusB.